We begin with the raw amino-acid sequence, 87 residues long: Small ribosomal subunit protein uS17 (87 aa).

Belongs to the universal ribosomal protein uS17 family. In terms of assembly, part of the 30S ribosomal subunit.

Functionally, one of the primary rRNA binding proteins, it binds specifically to the 5'-end of 16S ribosomal RNA. In Cytophaga hutchinsonii (strain ATCC 33406 / DSM 1761 / CIP 103989 / NBRC 15051 / NCIMB 9469 / D465), this protein is Small ribosomal subunit protein uS17.